Reading from the N-terminus, the 879-residue chain is Metabotropic glutamate receptor 3 (879 aa).

The signal sequence occupies residues 1-24; the sequence is MKMLTRLQVLTLALFSKGFLLSLG. Residues 25-577 lie on the Extracellular side of the membrane; that stretch reads DHNFLRREIK…DYIRWEDAWA (553 aa). Residues Cys57 and Cys99 are joined by a disulfide bond. Residues Ser151 and 172–174 contribute to the L-glutamate site; that span reads AST. The N-linked (GlcNAc...) asparagine glycan is linked to Asn209. Tyr222 contacts L-glutamate. 7 disulfides stabilise this stretch: Cys240–Cys527, Cys361–Cys373, Cys412–Cys419, Cys509–Cys528, Cys513–Cys531, Cys534–Cys546, and Cys549–Cys562. N-linked (GlcNAc...) asparagine glycosylation is present at Asn292. L-glutamate is bound at residue Asp301. Lys389 contacts L-glutamate. N-linked (GlcNAc...) asparagine glycans are attached at residues Asn414 and Asn439. Residues 578–598 traverse the membrane as a helical segment; it reads IGPVTIACLGFMCTCMVITVF. Residues 599–613 are Cytoplasmic-facing; it reads IKHNNTPLVKASGRE. Residues 614-634 form a helical membrane-spanning segment; sequence LCYILLFGVGLSYCMTFFFIA. At 635 to 688 the chain is on the extracellular side; that stretch reads KPSPVICALRRLGLGSSFAICYSALLTKTNCIARIFDGVKNGAQRPKFISPSSQ. A helical membrane pass occupies residues 689–709; the sequence is VFICLGLILVQIVMVSVWLIL. Residues 710–735 are Cytoplasmic-facing; that stretch reads EAPGTRRYTLAEKRETVILKCNVKDS. Residues 736–756 traverse the membrane as a helical segment; it reads SMLISLTYDVILVILCTVYAF. The Extracellular segment spans residues 757–769; the sequence is KTRKCPENFNEAK. The helical transmembrane segment at 770–790 threads the bilayer; sequence FIGFTMYTTCIIWLAFLPIFY. At 791-807 the chain is on the cytoplasmic side; the sequence is VTSSDYRVQTTTMCISV. Residues 808-828 traverse the membrane as a helical segment; it reads SLSGFVVLGCLFAPKVHIILF. Residues 829 to 879 are Extracellular-facing; that stretch reads QPQKNVVTHRLHLNRFSVSGTGTTYSQSSASMYVPTVCNGREVLDSTTSSL.

It belongs to the G-protein coupled receptor 3 family. As to quaternary structure, interacts with TAMALIN.

The protein localises to the cell membrane. In terms of biological role, G-protein coupled receptor for glutamate. Ligand binding causes a conformation change that triggers signaling via guanine nucleotide-binding proteins (G proteins) and modulates the activity of down-stream effectors. Signaling inhibits adenylate cyclase activity. This is Metabotropic glutamate receptor 3 (GRM3) from Macaca fascicularis (Crab-eating macaque).